A 548-amino-acid chain; its full sequence is CTP synthase (548 aa).

Residues 1-270 are amidoligase domain; the sequence is MTKYVFVTGG…DNIVCEALGL (270 aa). S13 contacts CTP. S13 serves as a coordination point for UTP. ATP-binding positions include 14–19 and D71; that span reads SLGKGI. Residues D71 and E144 each contribute to the Mg(2+) site. CTP contacts are provided by residues 151–153, 191–196, and K227; these read DIE and KTKPTQ. Residues 191–196 and K227 each bind UTP; that span reads KTKPTQ. The 251-residue stretch at 295–545 folds into the Glutamine amidotransferase type-1 domain; sequence TIGMVGKYVD…IEAAIANHAR (251 aa). G356 contacts L-glutamine. The Nucleophile; for glutamine hydrolysis role is filled by C383. L-glutamine contacts are provided by residues 384 to 387, E407, and R473; that span reads LGMQ. Catalysis depends on residues H518 and E520.

Belongs to the CTP synthase family. Homotetramer.

The enzyme catalyses UTP + L-glutamine + ATP + H2O = CTP + L-glutamate + ADP + phosphate + 2 H(+). It catalyses the reaction L-glutamine + H2O = L-glutamate + NH4(+). The catalysed reaction is UTP + NH4(+) + ATP = CTP + ADP + phosphate + 2 H(+). Its pathway is pyrimidine metabolism; CTP biosynthesis via de novo pathway; CTP from UDP: step 2/2. Its activity is regulated as follows. Allosterically activated by GTP, when glutamine is the substrate; GTP has no effect on the reaction when ammonia is the substrate. The allosteric effector GTP functions by stabilizing the protein conformation that binds the tetrahedral intermediate(s) formed during glutamine hydrolysis. Inhibited by the product CTP, via allosteric rather than competitive inhibition. Catalyzes the ATP-dependent amination of UTP to CTP with either L-glutamine or ammonia as the source of nitrogen. Regulates intracellular CTP levels through interactions with the four ribonucleotide triphosphates. The chain is CTP synthase from Bordetella petrii (strain ATCC BAA-461 / DSM 12804 / CCUG 43448).